Here is a 572-residue protein sequence, read N- to C-terminus: Methionine--tRNA ligase (572 aa).

Positions 11-21 (PYINGIKHLGN) match the 'HIGH' region motif. The Zn(2+) site is built by Cys-143, Cys-146, Cys-156, and Cys-159. Residues 346 to 350 (QFSTS) carry the 'KMSKS' region motif. Thr-349 is an ATP binding site.

The protein belongs to the class-I aminoacyl-tRNA synthetase family. MetG type 1 subfamily. As to quaternary structure, monomer. Requires Zn(2+) as cofactor.

The protein localises to the cytoplasm. The catalysed reaction is tRNA(Met) + L-methionine + ATP = L-methionyl-tRNA(Met) + AMP + diphosphate. Functionally, is required not only for elongation of protein synthesis but also for the initiation of all mRNA translation through initiator tRNA(fMet) aminoacylation. The protein is Methionine--tRNA ligase of Cereibacter sphaeroides (strain KD131 / KCTC 12085) (Rhodobacter sphaeroides).